A 143-amino-acid chain; its full sequence is Mediator of RNA polymerase II transcription subunit 21 (143 aa).

A coiled-coil region spans residues 53-130 (KEFEKNIDEL…KVRTLTQDFT (78 aa)).

This sequence belongs to the Mediator complex subunit 21 family. As to quaternary structure, component of the Mediator complex.

It localises to the nucleus. Component of the Mediator complex, a coactivator involved in the regulated transcription of nearly all RNA polymerase II-dependent genes. Mediator functions as a bridge to convey information from gene-specific regulatory proteins to the basal RNA polymerase II transcription machinery. Mediator is recruited to promoters by direct interactions with regulatory proteins and serves as a scaffold for the assembly of a functional preinitiation complex with RNA polymerase II and the general transcription factors. The sequence is that of Mediator of RNA polymerase II transcription subunit 21 (SRB7) from Kluyveromyces lactis (strain ATCC 8585 / CBS 2359 / DSM 70799 / NBRC 1267 / NRRL Y-1140 / WM37) (Yeast).